A 264-amino-acid chain; its full sequence is Hydroxyethylthiazole kinase (264 aa).

Methionine 41 serves as a coordination point for substrate. ATP contacts are provided by lysine 117 and serine 163. Substrate is bound at residue glycine 190.

This sequence belongs to the Thz kinase family. The cofactor is Mg(2+).

The catalysed reaction is 5-(2-hydroxyethyl)-4-methylthiazole + ATP = 4-methyl-5-(2-phosphooxyethyl)-thiazole + ADP + H(+). It participates in cofactor biosynthesis; thiamine diphosphate biosynthesis; 4-methyl-5-(2-phosphoethyl)-thiazole from 5-(2-hydroxyethyl)-4-methylthiazole: step 1/1. In terms of biological role, catalyzes the phosphorylation of the hydroxyl group of 4-methyl-5-beta-hydroxyethylthiazole (THZ). This Thermoanaerobacter pseudethanolicus (strain ATCC 33223 / 39E) (Clostridium thermohydrosulfuricum) protein is Hydroxyethylthiazole kinase.